We begin with the raw amino-acid sequence, 498 residues long: MRIDPTTSGSGVSTLEKKNPGRVVQIIGPVLDVAFPPGKMPNIYNALVVQGRDSVGQPINVACEVQQLLGNNRVRAVAMSATEGLTRGMEVIDTGAPISVPVGGATLGRIFNVLGAAVDNLGPVDTSTTSPIHRSAPAFIQLDTKLSIFETGIKVVDLLAPYRRGGKIGLFGGAGVGKTVLIMELINNIAKAHGGVSVFGGVGERTREGNDLYMEMKESGVINEENIAESKVALVYGQMNEPPGARMRVGLTALTMAEYFRDVNEQDVLLFIDNIFRFVQAGSEVSALLGRMPSAVGYQPTLSTEMGSLQERITSTKEGSITSIQAVYVPADDLTDPAPATTFAHLDATTVLSRGLAAKGIYPAVDPLDSTSTMLQPRIVGEEHYETAQRVKQTLQRYKELQDIIAILGLDELSEEDRLLVARARKIERFLSQPFFVAEVFTGSPGKYVGLAETIRGFQLILSGELDGLPEQAFYLVGNIDEATAKAMKLEMESNLKK.

172–179 (GGAGVGKT) contributes to the ATP binding site.

This sequence belongs to the ATPase alpha/beta chains family. F-type ATPases have 2 components, CF(1) - the catalytic core - and CF(0) - the membrane proton channel. CF(1) has five subunits: alpha(3), beta(3), gamma(1), delta(1), epsilon(1). CF(0) has four main subunits: a(1), b(1), b'(1) and c(9-12).

It localises to the plastid. The protein resides in the chloroplast thylakoid membrane. It carries out the reaction ATP + H2O + 4 H(+)(in) = ADP + phosphate + 5 H(+)(out). Produces ATP from ADP in the presence of a proton gradient across the membrane. The catalytic sites are hosted primarily by the beta subunits. This is ATP synthase subunit beta, chloroplastic from Nicotiana rustica (Aztec tobacco).